Reading from the N-terminus, the 198-residue chain is uncharacterized protein (198 aa).

The segment at 166–198 (GYEPDEKARKKRERVKRSEVEDQLKINVKPTRR) is disordered.

This is an uncharacterized protein from Coxiella burnetii (strain RSA 493 / Nine Mile phase I).